The sequence spans 566 residues: 4-coumarate--CoA ligase-like 6 (566 aa).

Positions 1–21 (MAATHLHIPPNPKTQTSHQNP) are disordered. 6 residues coordinate ATP: Ser-212, Ser-213, Gly-214, Thr-215, Thr-216, and Lys-220. Tyr-263 provides a ligand contact to (E)-4-coumaroyl-AMP. A CoA-binding site is contributed by Arg-284. An SBD1 region spans residues 286–356 (DASDVVNVIE…QTLPHVDLIQ (71 aa)). Positions 334, 356, 357, and 361 each coordinate (E)-4-coumaroyl-AMP. Positions 356, 357, 361, 442, and 457 each coordinate ATP. Residues 357–421 (GYGMTESTAV…IQGPGVMKGY (65 aa)) form an SBD2 region. (E)-4-coumaroyl-AMP contacts are provided by Lys-459 and Lys-463. CoA is bound by residues Lys-465 and Gly-466. ATP is bound at residue Lys-548. A Microbody targeting signal motif is present at residues 564–566 (SRL).

Belongs to the ATP-dependent AMP-binding enzyme family. Mg(2+) serves as cofactor. In terms of tissue distribution, expressed at very low level in leaves.

The protein resides in the peroxisome. It catalyses the reaction (E)-4-coumarate + ATP + CoA = (E)-4-coumaroyl-CoA + AMP + diphosphate. The catalysed reaction is (E)-4-coumarate + ATP + H(+) = (E)-4-coumaroyl-AMP + diphosphate. It carries out the reaction (E)-4-coumaroyl-AMP + CoA = (E)-4-coumaroyl-CoA + AMP + H(+). The enzyme catalyses (E)-ferulate + ATP + CoA = (E)-feruloyl-CoA + AMP + diphosphate. It catalyses the reaction (E)-ferulate + ATP + H(+) = (E)-feruloyl-AMP + diphosphate. The catalysed reaction is (E)-feruloyl-AMP + CoA = (E)-feruloyl-CoA + AMP + H(+). It carries out the reaction (E)-caffeate + ATP + CoA = (E)-caffeoyl-CoA + AMP + diphosphate. The enzyme catalyses (E)-caffeate + ATP + H(+) = (E)-caffeoyl-AMP + diphosphate. It catalyses the reaction (E)-caffeoyl-AMP + CoA = (E)-caffeoyl-CoA + AMP + H(+). The catalysed reaction is (E)-cinnamate + ATP + CoA = (E)-cinnamoyl-CoA + AMP + diphosphate. It carries out the reaction 4-hydroxybenzoate + ATP + CoA = 4-hydroxybenzoyl-CoA + AMP + diphosphate. The enzyme catalyses tetradecanoate + ATP + CoA = tetradecanoyl-CoA + AMP + diphosphate. It catalyses the reaction hexanoate + ATP + CoA = hexanoyl-CoA + AMP + diphosphate. The catalysed reaction is heptanoate + ATP + CoA = heptanoyl-CoA + AMP + diphosphate. Functionally, contributes to jasmonic acid biosynthesis by initiating the beta-oxidative chain shortening of its precursors. Acts as a carboxylate--CoA ligase that can use preferentially p-coumarate, ferulate and caffeate as substrates and, with a lower efficiency, (E)-cinnamate and 4-hydroxybenzoate as substrates. Involved in the biosynthesis of ubiquinone from phenylalanine by activating the propyl side chain of 4-coumarate, and possibly trans-cinnamate and 4-hydroxybenzoate, for subsequent beta-oxidative shortening and the formation of the benzenoid moiety of ubiquinone. Follows a two-step reaction mechanism, wherein the carboxylate substrate first undergoes adenylation by ATP, followed by a thioesterification in the presence of CoA to yield the final CoA thioester. This is 4-coumarate--CoA ligase-like 6 from Arabidopsis thaliana (Mouse-ear cress).